A 176-amino-acid chain; its full sequence is Large ribosomal subunit protein uL10 (176 aa).

This sequence belongs to the universal ribosomal protein uL10 family. In terms of assembly, part of the ribosomal stalk of the 50S ribosomal subunit. The N-terminus interacts with L11 and the large rRNA to form the base of the stalk. The C-terminus forms an elongated spine to which L12 dimers bind in a sequential fashion forming a multimeric L10(L12)X complex.

Its function is as follows. Forms part of the ribosomal stalk, playing a central role in the interaction of the ribosome with GTP-bound translation factors. The protein is Large ribosomal subunit protein uL10 of Saccharophagus degradans (strain 2-40 / ATCC 43961 / DSM 17024).